We begin with the raw amino-acid sequence, 101 residues long: Large ribosomal subunit protein uL24 (101 aa).

The protein belongs to the universal ribosomal protein uL24 family. As to quaternary structure, part of the 50S ribosomal subunit.

One of two assembly initiator proteins, it binds directly to the 5'-end of the 23S rRNA, where it nucleates assembly of the 50S subunit. Its function is as follows. One of the proteins that surrounds the polypeptide exit tunnel on the outside of the subunit. This Streptococcus equi subsp. zooepidemicus (strain H70) protein is Large ribosomal subunit protein uL24.